A 461-amino-acid polypeptide reads, in one-letter code: Probable tubulin polyglutamylase TTLL9 (461 aa).

Over residues 1–10 (MSRQKSQTSK) the composition is skewed to polar residues. The interval 1–20 (MSRQKSQTSKGHGASKGKER) is disordered. A TTL domain is found at 22 to 402 (QRTLIRFKTT…EARLTGKEKR (381 aa)). ATP contacts are provided by residues Lys149 and 155–156 (QG). Gln155 contacts a protein. Positions 186–197 (QATRANVNPSGS) are enriched in polar residues. The segment at 186 to 208 (QATRANVNPSGSHDTRSSDDQKD) is disordered. Over residues 198 to 208 (HDTRSSDDQKD) the composition is skewed to basic and acidic residues. Residues 218–221 (QRYV) and 231–233 (KFD) each bind ATP. Position 257 (Arg257) interacts with L-glutamate. 276–277 (TN) provides a ligand contact to ATP. Lys294 lines the L-glutamate pocket. Positions 348, 361, and 363 each coordinate Mg(2+). Position 379 (Lys379) interacts with L-glutamate.

It belongs to the tubulin--tyrosine ligase family. Mg(2+) serves as cofactor.

It is found in the cytoplasm. The protein localises to the cytoskeleton. Its subcellular location is the cilium basal body. The protein resides in the flagellum axoneme. The enzyme catalyses (L-glutamyl)(n)-gamma-L-glutamyl-L-glutamyl-[protein] + L-glutamate + ATP = (L-glutamyl)(n+1)-gamma-L-glutamyl-L-glutamyl-[protein] + ADP + phosphate + H(+). Its function is as follows. Probable tubulin polyglutamylase that generates side chains of glutamate on the gamma-carboxyl group of specific glutamate residues within the C-terminal tail of target proteins. Similar to TTLL1, may acquire enzymatic activity only in complex with other proteins as it is most likely lacking domains important for autonomous activity. Mediates tubulin polyglutamylation which induces establishment of microtubule heterogeneity in sperm flagella, thereby playing a role in normal motile flagella axoneme structure and sperm flagella beating pattern. This chain is Probable tubulin polyglutamylase TTLL9 (Ttll9), found in Rattus norvegicus (Rat).